The chain runs to 369 residues: Choline kinase B2 (369 aa).

This sequence belongs to the choline/ethanolamine kinase family. Requires Mg(2+) as cofactor.

The enzyme catalyses choline + ATP = phosphocholine + ADP + H(+). Its pathway is phospholipid metabolism; phosphatidylcholine biosynthesis; phosphocholine from choline: step 1/1. Catalyzes the first step in phosphatidylcholine biosynthesis. Phosphorylates choline. The polypeptide is Choline kinase B2 (ckb-2) (Caenorhabditis elegans).